Here is a 363-residue protein sequence, read N- to C-terminus: DNA replication and repair protein RecF (363 aa).

Residue 31–38 (GANSSGKT) coordinates ATP.

The protein belongs to the RecF family.

It is found in the cytoplasm. Its function is as follows. The RecF protein is involved in DNA metabolism; it is required for DNA replication and normal SOS inducibility. RecF binds preferentially to single-stranded, linear DNA. It also seems to bind ATP. This is DNA replication and repair protein RecF from Nitrosococcus oceani (strain ATCC 19707 / BCRC 17464 / JCM 30415 / NCIMB 11848 / C-107).